We begin with the raw amino-acid sequence, 195 residues long: Interferon tau-2 (195 aa).

The N-terminal stretch at 1–23 (MAFVLSLLMALVLVSYGPGGSLG) is a signal peptide. Disulfide bonds link Cys-24–Cys-122 and Cys-52–Cys-162.

It belongs to the alpha/beta interferon family. IFN-alphaII subfamily. In terms of tissue distribution, constitutively and exclusively expressed in the mononuclear cells of the extraembryonic trophectoderm.

It localises to the secreted. Paracrine hormone primarily responsible for maternal recognition of pregnancy. Interacts with endometrial receptors, probably type I interferon receptors, and blocks estrogen receptor expression, preventing the estrogen-induced increase in oxytocin receptor expression in the endometrium. This results in the suppression of the pulsatile endometrial release of the luteolytic hormone prostaglandin F2-alpha, hindering the regression of the corpus luteum (luteolysis) and therefore a return to ovarian cyclicity. This, and a possible direct effect of IFN-tau on prostaglandin synthesis, leads in turn to continued ovarian progesterone secretion, which stimulates the secretion by the endometrium of the nutrients required for the growth of the conceptus. In summary, displays particularly high antiviral and antiproliferative potency concurrently with particular weak cytotoxicity, high antiluteolytic activity and immunomodulatory properties. In contrast with other IFNs, IFN-tau is not virally inducible. This Ovis aries (Sheep) protein is Interferon tau-2 (IFNT2).